Here is a 139-residue protein sequence, read N- to C-terminus: Deoxyuridine 5'-triphosphate nucleotidohydrolase (139 aa).

Substrate-binding positions include 58-60, Asn71, 75-77, and Met85; these read RSG and LID.

This sequence belongs to the dUTPase family. The cofactor is Mg(2+).

The enzyme catalyses dUTP + H2O = dUMP + diphosphate + H(+). It participates in pyrimidine metabolism; dUMP biosynthesis; dUMP from dCTP (dUTP route): step 2/2. In terms of biological role, this enzyme is involved in nucleotide metabolism: it produces dUMP, the immediate precursor of thymidine nucleotides and it decreases the intracellular concentration of dUTP so that uracil cannot be incorporated into DNA. The sequence is that of Deoxyuridine 5'-triphosphate nucleotidohydrolase from Gamma-proteobacterium EBAC31A08.